The primary structure comprises 159 residues: NADH-quinone oxidoreductase subunit I (159 aa).

4Fe-4S ferredoxin-type domains lie at 51 to 80 (RRYE…IESD) and 90 to 119 (TRYD…EGPN). Residues cysteine 60, cysteine 63, cysteine 66, cysteine 70, cysteine 99, cysteine 102, cysteine 105, and cysteine 109 each coordinate [4Fe-4S] cluster.

The protein belongs to the complex I 23 kDa subunit family. As to quaternary structure, NDH-1 is composed of 14 different subunits. Subunits NuoA, H, J, K, L, M, N constitute the membrane sector of the complex. [4Fe-4S] cluster is required as a cofactor.

It is found in the cell inner membrane. It catalyses the reaction a quinone + NADH + 5 H(+)(in) = a quinol + NAD(+) + 4 H(+)(out). Its function is as follows. NDH-1 shuttles electrons from NADH, via FMN and iron-sulfur (Fe-S) centers, to quinones in the respiratory chain. The immediate electron acceptor for the enzyme in this species is believed to be ubiquinone. Couples the redox reaction to proton translocation (for every two electrons transferred, four hydrogen ions are translocated across the cytoplasmic membrane), and thus conserves the redox energy in a proton gradient. The sequence is that of NADH-quinone oxidoreductase subunit I from Rickettsia typhi (strain ATCC VR-144 / Wilmington).